We begin with the raw amino-acid sequence, 357 residues long: Protein RecA (357 aa).

71–78 contacts ATP; the sequence is GPESSGKT.

This sequence belongs to the RecA family.

It is found in the cytoplasm. Its function is as follows. Can catalyze the hydrolysis of ATP in the presence of single-stranded DNA, the ATP-dependent uptake of single-stranded DNA by duplex DNA, and the ATP-dependent hybridization of homologous single-stranded DNAs. It interacts with LexA causing its activation and leading to its autocatalytic cleavage. The protein is Protein RecA of Ehrlichia chaffeensis (strain ATCC CRL-10679 / Arkansas).